Here is a 440-residue protein sequence, read N- to C-terminus: Glycerophosphocholine cholinephosphodiesterase ENPP6 (440 aa).

The signal sequence occupies residues 1-22 (MAVKLGTLLLALALGLAQPASA). Residues aspartate 32, serine 71, and asparagine 92 each coordinate substrate. Residues aspartate 32 and serine 71 each coordinate Zn(2+). Serine 71 (nucleophile) is an active-site residue. The residue at position 71 (serine 71) is a Phosphoserine. 2 N-linked (GlcNAc...) asparagine glycosylation sites follow: asparagine 100 and asparagine 118. A disulfide bridge connects residues cysteine 142 and cysteine 154. Aspartate 193 contacts substrate. Residues aspartate 193, histidine 197, aspartate 240, and histidine 241 each coordinate Zn(2+). Substrate is bound at residue histidine 241. N-linked (GlcNAc...) asparagine glycosylation occurs at asparagine 341. Histidine 354 serves as a coordination point for substrate. Zn(2+) is bound at residue histidine 354. A glycan (N-linked (GlcNAc...) asparagine) is linked at asparagine 404. Alanine 418 is lipidated: GPI-anchor amidated alanine. The propeptide at 419-440 (GTTPPVQPSHCALALILLFLLA) is removed in mature form.

Belongs to the nucleotide pyrophosphatase/phosphodiesterase family. As to quaternary structure, homodimer; disulfide-linked. Homotetramer. Zn(2+) serves as cofactor.

The protein resides in the cell membrane. The enzyme catalyses sn-glycerol 3-phosphocholine + H2O = phosphocholine + glycerol + H(+). It catalyses the reaction a 1-acyl-sn-glycero-3-phosphocholine + H2O = a 1-acyl-sn-glycerol + phosphocholine + H(+). The catalysed reaction is a 1-O-alkyl-sn-glycero-3-phosphocholine + H2O = a 1-O-alkyl-sn-glycerol + phosphocholine + H(+). It carries out the reaction 1-dodecanoyl-sn-glycero-3-phosphocholine + H2O = 1-dodecanoyl-sn-glycerol + phosphocholine + H(+). The enzyme catalyses 1-hexadecanoyl-sn-glycero-3-phosphocholine + H2O = 1-hexadecanoyl-sn-glycerol + phosphocholine + H(+). It catalyses the reaction 1-(5Z,8Z,11Z,14Z-eicosatetraenoyl)-sn-glycero-3-phosphocholine + H2O = 1-(5Z,8Z,11Z,14Z-eicosatetraenoyl)-sn-glycerol + phosphocholine + H(+). The catalysed reaction is 1-tetradecanoyl-sn-glycero-3-phosphocholine + H2O = 1-tetradecanoyl-sn-glycerol + phosphocholine + H(+). It carries out the reaction sphing-4-enine-phosphocholine + H2O = sphing-4-enine + phosphocholine + H(+). The enzyme catalyses 1-(9Z-octadecenoyl)-sn-glycero-3-phosphocholine + H2O = 1-(9Z-octadecenoyl)-sn-glycerol + phosphocholine + H(+). It catalyses the reaction 1-(9Z,12Z)-octadecadienoyl-sn-glycero-3-phosphocholine + H2O = 1-(9Z,12Z-octadecadienoyl)-sn-glycerol + phosphocholine + H(+). The catalysed reaction is glycero-2-phosphocholine + H2O = phosphocholine + glycerol + H(+). With respect to regulation, inhibited by EDTA and EGTA in vitro. In terms of biological role, choline-specific glycerophosphodiesterase that hydrolyzes glycerophosphocholine (GPC) and lysophosphatidylcholine (LPC) and contributes to supplying choline to the cells. Has a preference for LPC with short (12:0 and 14:0) or polyunsaturated (18:2 and 20:4) fatty acids. In vitro, hydrolyzes only choline-containing lysophospholipids, such as sphingosylphosphorylcholine (SPC), platelet-activating factor (PAF) and lysoPAF, but not other lysophospholipids. This chain is Glycerophosphocholine cholinephosphodiesterase ENPP6, found in Pongo abelii (Sumatran orangutan).